The sequence spans 598 residues: MPDIKVTPLGAGQDVGRSCILVSIGGKNIMLDCGMHMGFNDDRRFPDFSYITQNGRLTEFLDCVIISHFHLDHCGALPYMSEMVGYDGPIYMTHPTKAICPILLEDFRKITVDKKGETNFFTSQMIKDCMKKVVPLNLHQTVQVDDELEIKAYYAGHVLGAAMVQIKVGSESVVYTGDYNMTPDRHLGAAWIDKCRPDILISESTYATTIRDSKRCRERDFLKKVHETVERGGKVLIPVFALGRAQELCILLETFWERMNLKAPIYFSTGLTEKANHYYKLFITWTNQKIRKTFVQRNMFEFKHIKAFDRSYADNPGPMVVFATPGMLHAGQSLQIFKKWAGNEKNMVIMPGYCVQGTVGHKILNGQKKLEMEGRATLDVKLQVEYMSFSAHADAKGIMQLIRMAEPRNMLLVHGEAKKMEFLKDKIEQEFSISCFMPANGETTTIVTNPSVPVDISLNLLKREMALGGPLPDAKRPRTMHGTLIMKDNSLRLVSPEQALKELGLNEHQLRFTCRVQLHDPHSDTDTLSRIYTHLKSVLKSYSIQHVPDGTVIVESIVIKVTSSAEEPNLKVILLSWSYQDEELGSFLSTLLKKGLPS.

Residues His-68, His-70, Asp-72, His-73, His-157, and Asp-178 each coordinate Zn(2+). Residues 68–73 (HFHLDH) carry the HXHXDH motif motif. Glu-203 is an active-site residue. Residue His-414 participates in Zn(2+) binding. A Nuclear localization signal motif is present at residues 470–480 (PLPDAKRPRTM).

Belongs to the metallo-beta-lactamase superfamily. RNA-metabolizing metallo-beta-lactamase-like family. INTS11 subfamily. In terms of assembly, component of the Integrator complex, composed of core subunits INTS1, INTS2, INTS3, INTS4, INTS5, INTS6, INTS7, INTS8, INTS9/RC74, INTS10, INTS11/CPSF3L, INTS12, INTS13, INTS14 and INTS15. The core complex associates with protein phosphatase 2A subunits PPP2CA and PPP2R1A, to form the Integrator-PP2A (INTAC) complex. INTS11 is part of the RNA endonuclease subcomplex, composed of INTS4, INTS9, INTS11 and inositol hexakisphosphate (InsP6). It depends on Zn(2+) as a cofactor.

It localises to the nucleus. The protein resides in the cytoplasm. Its function is as follows. RNA endonuclease component of the integrator complex, a multiprotein complex that terminates RNA polymerase II (Pol II) transcription in the promoter-proximal region of genes. The integrator complex provides a quality checkpoint during transcription elongation by driving premature transcription termination of transcripts that are unfavorably configured for transcriptional elongation: the complex terminates transcription by (1) catalyzing dephosphorylation of the C-terminal domain (CTD) of Pol II subunit POLR2A/RPB1 and SUPT5H/SPT5, (2) degrading the exiting nascent RNA transcript via endonuclease activity and (3) promoting the release of Pol II from bound DNA. The integrator complex is also involved in terminating the synthesis of non-coding Pol II transcripts, such as enhancer RNAs (eRNAs), small nuclear RNAs (snRNAs), telomerase RNAs and long non-coding RNAs (lncRNAs). Within the integrator complex, INTS11 constitutes the RNA endonuclease subunit that degrades exiting nascent RNA transcripts. In Danio rerio (Zebrafish), this protein is Integrator complex subunit 11 (cpsf3l).